A 437-amino-acid polypeptide reads, in one-letter code: Homogentisate 1,2-dioxygenase (437 aa).

Residues 15 to 34 (NEHATSDPRVPDALPVGQNS) are disordered. Fe cation is bound by residues H336, E342, and H372.

Belongs to the homogentisate dioxygenase family. Fe cation serves as cofactor. In terms of tissue distribution, expressed in the hypodermis and intestine.

The catalysed reaction is homogentisate + O2 = 4-maleylacetoacetate + H(+). It participates in amino-acid degradation; L-phenylalanine degradation; acetoacetate and fumarate from L-phenylalanine: step 4/6. Its function is as follows. Plays a role in the tyrosine degradation pathway. In Caenorhabditis elegans, this protein is Homogentisate 1,2-dioxygenase.